The following is a 454-amino-acid chain: PC-esterase domain-containing protein 1A (454 aa).

Belongs to the PC-esterase family.

The protein is PC-esterase domain-containing protein 1A (PCED1A) of Homo sapiens (Human).